A 584-amino-acid chain; its full sequence is Complement component C8 alpha chain (584 aa).

Residues M1–A20 form the signal peptide. A propeptide spanning residues Q21 to R30 is cleaved from the precursor. The TSP type-1 1 domain occupies T38–V91. Cystine bridges form between C39-C74, C50-C84, C53-C90, C96-C108, C102-C121, C115-C130, and C140-C177. Residue W44 is glycosylated (C-linked (Man) tryptophan). The LDL-receptor class A domain occupies A94–D132. Ca(2+) contacts are provided by L113, N116, D118, D120, D126, and E127. In terms of domain architecture, MACPF spans A135 to R498. The next 4 membrane-spanning stretches (beta stranded) occupy residues F248–P256, S259–G266, G377–Y384, and V390–S395. C375 and C399 are disulfide-bonded. N437 is a glycosylation site (N-linked (GlcNAc...) asparagine). 4 disulfides stabilise this stretch: C497-C544, C499-C515, C502-C517, and C519-C528. Residues C499–E529 form the EGF-like domain. The TSP type-1 2 domain maps to D539–A583. C-linked (Man) tryptophan glycans are attached at residues W542, W545, and W548. Intrachain disulfides connect C551–C584 and C562–C574. Residues C562 to C584 are disordered.

It belongs to the complement C6/C7/C8/C9 family. In terms of assembly, heterotrimer of 3 chains: alpha (C8A), beta (C8B) and gamma (C8G); the alpha and gamma chains are disulfide bonded. Component of the membrane attack complex (MAC), composed of complement C5b, C6, C7, C8A, C8B, C8G and multiple copies of the pore-forming subunit C9.

Its subcellular location is the secreted. It localises to the target cell membrane. Its activity is regulated as follows. Membrane attack complex (MAC) assembly is inhibited by CD59, thereby protecting self-cells from damage during complement activation. CD59 acts by binding to the beta-haipins of C8 (C8A and C8B), forming an intermolecular beta-sheet that prevents incorporation of the multiple copies of C9 required for complete formation of the osmolytic pore. MAC assembly is also inhibited by clusterin (CLU) chaperones that inhibit polymerization of C9. Functionally, component of the membrane attack complex (MAC), a multiprotein complex activated by the complement cascade, which inserts into a target cell membrane and forms a pore, leading to target cell membrane rupture and cell lysis. The MAC is initiated by proteolytic cleavage of C5 into complement C5b in response to the classical, alternative, lectin and GZMK complement pathways. The complement pathways consist in a cascade of proteins that leads to phagocytosis and breakdown of pathogens and signaling that strengthens the adaptive immune system. C8A, together with C8B and C8G, inserts into the target membrane, but does not form pores by itself. During MAC assembly, associates with C5b, C6 and C7 to form the C5b8 intermediate complex that inserts into the target membrane and traverses the bilayer increasing membrane rigidity. In Homo sapiens (Human), this protein is Complement component C8 alpha chain.